Here is an 875-residue protein sequence, read N- to C-terminus: Alanine--tRNA ligase (875 aa).

Residues His-565, His-569, Cys-666, and His-670 each coordinate Zn(2+).

The protein belongs to the class-II aminoacyl-tRNA synthetase family. Requires Zn(2+) as cofactor.

It is found in the cytoplasm. It catalyses the reaction tRNA(Ala) + L-alanine + ATP = L-alanyl-tRNA(Ala) + AMP + diphosphate. Its function is as follows. Catalyzes the attachment of alanine to tRNA(Ala) in a two-step reaction: alanine is first activated by ATP to form Ala-AMP and then transferred to the acceptor end of tRNA(Ala). Also edits incorrectly charged Ser-tRNA(Ala) and Gly-tRNA(Ala) via its editing domain. In Leptothrix cholodnii (strain ATCC 51168 / LMG 8142 / SP-6) (Leptothrix discophora (strain SP-6)), this protein is Alanine--tRNA ligase.